The chain runs to 382 residues: Galactokinase (382 aa).

Position 34–37 (34–37) interacts with substrate; it reads EHTD. An ATP-binding site is contributed by 124-130; sequence GAGLSSS. Residues serine 130 and glutamate 162 each coordinate Mg(2+). Aspartate 174 serves as the catalytic Proton acceptor. A substrate-binding site is contributed by tyrosine 223.

This sequence belongs to the GHMP kinase family. GalK subfamily.

Its subcellular location is the cytoplasm. The catalysed reaction is alpha-D-galactose + ATP = alpha-D-galactose 1-phosphate + ADP + H(+). It participates in carbohydrate metabolism; galactose metabolism. Catalyzes the transfer of the gamma-phosphate of ATP to D-galactose to form alpha-D-galactose-1-phosphate (Gal-1-P). This chain is Galactokinase, found in Shigella boydii serotype 4 (strain Sb227).